The chain runs to 476 residues: MEFEAVIGLEVHVELLTETKIYCGCSTAFGSEPNKHVCPVCLGLPGSLPRLNKKVVEYAIKAGLALNCSINNKSRMDRKNYFYADCPKNYQITQQEIPICREGFIEIRNHLGEKKRIGIERIHMEEDAGKLIHTDEGTLIDYNRAGIPLIEIVSKPDIRTSKEAVSYLEDLRNILKFIGVSDCKMEQGSLRCDCNISIRPKHNLKLGVKTEIKNMNSFKALEKAIQYEYKRQSDLIESGEKVRQETRRWNDAKNVTEVMRSKEYANDYRYFPEGDLTAINISDNYIDNIRKTIPELPDKKIDRFVEEFKISRKEIEILILNMEIGDFFENAAKLSGDPKSVSNWITGDISRLAKETGIPLNNLNFTERDLAELIEFINCGVISNNIGKKVIEEMFYKGKSPRQIIHEKGFVQNSSKEKILKVVKEVMEENPKSIEDYKKGKKKAVKFMIGMVMKKTKGNANPMLVNKLVEEEIGKY.

The protein belongs to the GatB/GatE family. GatB subfamily. As to quaternary structure, heterotrimer of A, B and C subunits.

The enzyme catalyses L-glutamyl-tRNA(Gln) + L-glutamine + ATP + H2O = L-glutaminyl-tRNA(Gln) + L-glutamate + ADP + phosphate + H(+). It carries out the reaction L-aspartyl-tRNA(Asn) + L-glutamine + ATP + H2O = L-asparaginyl-tRNA(Asn) + L-glutamate + ADP + phosphate + 2 H(+). Its function is as follows. Allows the formation of correctly charged Asn-tRNA(Asn) or Gln-tRNA(Gln) through the transamidation of misacylated Asp-tRNA(Asn) or Glu-tRNA(Gln) in organisms which lack either or both of asparaginyl-tRNA or glutaminyl-tRNA synthetases. The reaction takes place in the presence of glutamine and ATP through an activated phospho-Asp-tRNA(Asn) or phospho-Glu-tRNA(Gln). The chain is Aspartyl/glutamyl-tRNA(Asn/Gln) amidotransferase subunit B from Clostridium kluyveri (strain ATCC 8527 / DSM 555 / NBRC 12016 / NCIMB 10680 / K1).